The following is a 944-amino-acid chain: Protocadherin gamma-C5 (944 aa).

The N-terminal stretch at 1–29 is a signal peptide; sequence MGPKTLPQLAGKWQVLCMLSLCCWGWVSG. Cadherin domains are found at residues 30–133, 134–242, 243–350, 351–454, 455–564, and 571–677; these read QLRY…SPSF, ATPE…APTF, QSSV…APEV, LLAS…APRF, NQQL…APAV, and WEHS…MPKS. Over 30–693 the chain is Extracellular; it reads QLRYSVVEES…PPERSDLTLY (664 aa). 3 N-linked (GlcNAc...) asparagine glycosylation sites follow: Asn-265, Asn-443, and Asn-547. Residues 694–714 traverse the membrane as a helical segment; sequence LIVALATVSLLSLVTFTFLSA. Over 715 to 944 the chain is Cytoplasmic; that stretch reads KCLQGNADGD…KKKSGKKEKK (230 aa). Disordered stretches follow at residues 722-747, 812-853, and 914-944; these read DGDG…QSSP, SNTL…WPNN, and ATLT…KEKK. The segment covering 820–853 has biased composition (polar residues); the sequence is QQAPPNTDWRFSQAQRPGTSGSQNGDDTGTWPNN. The span at 934–944 shows a compositional bias: basic residues; that stretch reads NKKKSGKKEKK.

It is found in the cell membrane. Potential calcium-dependent cell-adhesion protein. May be involved in the establishment and maintenance of specific neuronal connections in the brain. This Homo sapiens (Human) protein is Protocadherin gamma-C5 (PCDHGC5).